We begin with the raw amino-acid sequence, 352 residues long: Uroporphyrinogen decarboxylase (352 aa).

Substrate is bound by residues 26–30 (RQAGR), Asp76, Tyr153, Ser208, and His323.

This sequence belongs to the uroporphyrinogen decarboxylase family. In terms of assembly, homodimer.

The protein resides in the cytoplasm. The enzyme catalyses uroporphyrinogen III + 4 H(+) = coproporphyrinogen III + 4 CO2. The protein operates within porphyrin-containing compound metabolism; protoporphyrin-IX biosynthesis; coproporphyrinogen-III from 5-aminolevulinate: step 4/4. Functionally, catalyzes the decarboxylation of four acetate groups of uroporphyrinogen-III to yield coproporphyrinogen-III. This is Uroporphyrinogen decarboxylase from Prochlorococcus marinus (strain NATL2A).